The primary structure comprises 442 residues: tRNA modification GTPase MnmE (442 aa).

Positions 22, 79, and 119 each coordinate (6S)-5-formyl-5,6,7,8-tetrahydrofolate. One can recognise a TrmE-type G domain in the interval 216-366; that stretch reads GIKTCLVGAP…LLEKIKSIFA (151 aa). K(+) is bound at residue asparagine 226. Residues 226–231, 245–251, and 270–273 contribute to the GTP site; these read NSGKSS, SEIPGTT, and DTAG. Mg(2+) is bound at residue serine 230. The K(+) site is built by serine 245, isoleucine 247, and threonine 250. Threonine 251 lines the Mg(2+) pocket. Position 442 (lysine 442) interacts with (6S)-5-formyl-5,6,7,8-tetrahydrofolate.

This sequence belongs to the TRAFAC class TrmE-Era-EngA-EngB-Septin-like GTPase superfamily. TrmE GTPase family. As to quaternary structure, homodimer. Heterotetramer of two MnmE and two MnmG subunits. K(+) is required as a cofactor.

Its subcellular location is the cytoplasm. Its function is as follows. Exhibits a very high intrinsic GTPase hydrolysis rate. Involved in the addition of a carboxymethylaminomethyl (cmnm) group at the wobble position (U34) of certain tRNAs, forming tRNA-cmnm(5)s(2)U34. In Mesomycoplasma hyopneumoniae (strain 7448) (Mycoplasma hyopneumoniae), this protein is tRNA modification GTPase MnmE.